The sequence spans 252 residues: MRILVSNDDGYNAPGLEALVEALSGLGELTVVAPETNHSGASNSLTLNRPLTVRTASNGFIYVNGTPSDCVHVALTGLMDARPDLVVSGINNGANMGDDTLYSGTVAAASEGYLFGIPSIAFSLIEKGWQHIESAARAARQVVERQIAQPLAAPVLLNVNIPNRRYEDMKGYAVTRLGKRHPSEPVVRTTTPYGDTVYWIGPVGLAADATPGTDFHATAQGQVSVTPLRLDLTQHSQLDDVRNWAEPLCVNA.

Residues Asp-8, Asp-9, Ser-39, and Asn-91 each coordinate a divalent metal cation.

Belongs to the SurE nucleotidase family. A divalent metal cation serves as cofactor.

It is found in the cytoplasm. The enzyme catalyses a ribonucleoside 5'-phosphate + H2O = a ribonucleoside + phosphate. Its function is as follows. Nucleotidase that shows phosphatase activity on nucleoside 5'-monophosphates. This chain is 5'-nucleotidase SurE, found in Bordetella bronchiseptica (strain ATCC BAA-588 / NCTC 13252 / RB50) (Alcaligenes bronchisepticus).